Reading from the N-terminus, the 131-residue chain is Large-conductance mechanosensitive channel (131 aa).

A run of 3 helical transmembrane segments spans residues 8 to 28 (FALK…GAFG), 30 to 50 (IVTS…VGGI), and 72 to 92 (GQFI…FMFI).

The protein belongs to the MscL family. As to quaternary structure, homopentamer.

The protein localises to the cell membrane. Channel that opens in response to stretch forces in the membrane lipid bilayer. May participate in the regulation of osmotic pressure changes within the cell. This is Large-conductance mechanosensitive channel from Alkaliphilus oremlandii (strain OhILAs) (Clostridium oremlandii (strain OhILAs)).